A 479-amino-acid chain; its full sequence is ATP synthase subunit beta, chloroplastic (479 aa).

156–163 (GGAGVGKT) contributes to the ATP binding site.

It belongs to the ATPase alpha/beta chains family. As to quaternary structure, F-type ATPases have 2 components, CF(1) - the catalytic core - and CF(0) - the membrane proton channel. CF(1) has five subunits: alpha(3), beta(3), gamma(1), delta(1), epsilon(1). CF(0) has four main subunits: a(1), b(1), b'(1) and c(9-12).

The protein localises to the plastid. It localises to the chloroplast thylakoid membrane. The catalysed reaction is ATP + H2O + 4 H(+)(in) = ADP + phosphate + 5 H(+)(out). Produces ATP from ADP in the presence of a proton gradient across the membrane. The catalytic sites are hosted primarily by the beta subunits. This chain is ATP synthase subunit beta, chloroplastic, found in Trichomanes davallioides (Kilau fern).